Here is a 530-residue protein sequence, read N- to C-terminus: Phosphoenolpyruvate carboxykinase (ATP) (530 aa).

Substrate-binding residues include Arg-58, Tyr-195, and Lys-201. Residues Lys-201, His-220, and 236–244 contribute to the ATP site; that span reads GLSGTGKTT. Mn(2+) is bound by residues Lys-201 and His-220. Asp-257 lines the Mn(2+) pocket. Residues Glu-285, Arg-321, 440 to 441, and Thr-446 each bind ATP; that span reads RI. A substrate-binding site is contributed by Arg-321.

It belongs to the phosphoenolpyruvate carboxykinase (ATP) family. It depends on Mn(2+) as a cofactor.

The protein localises to the cytoplasm. It carries out the reaction oxaloacetate + ATP = phosphoenolpyruvate + ADP + CO2. The protein operates within carbohydrate biosynthesis; gluconeogenesis. Its function is as follows. Involved in the gluconeogenesis. Catalyzes the conversion of oxaloacetate (OAA) to phosphoenolpyruvate (PEP) through direct phosphoryl transfer between the nucleoside triphosphate and OAA. In Staphylococcus aureus (strain MSSA476), this protein is Phosphoenolpyruvate carboxykinase (ATP).